We begin with the raw amino-acid sequence, 688 residues long: Polyribonucleotide nucleotidyltransferase (688 aa).

Mg(2+) contacts are provided by aspartate 484 and aspartate 490. The KH domain maps to proline 550 to isoleucine 609. One can recognise an S1 motif domain in the interval aspartate 626–alanine 688.

It belongs to the polyribonucleotide nucleotidyltransferase family. Mg(2+) is required as a cofactor.

The protein resides in the cytoplasm. The catalysed reaction is RNA(n+1) + phosphate = RNA(n) + a ribonucleoside 5'-diphosphate. In terms of biological role, involved in mRNA degradation. Catalyzes the phosphorolysis of single-stranded polyribonucleotides processively in the 3'- to 5'-direction. The chain is Polyribonucleotide nucleotidyltransferase from Helicobacter pylori (strain G27).